We begin with the raw amino-acid sequence, 438 residues long: Thymidine phosphorylase (438 aa).

It belongs to the thymidine/pyrimidine-nucleoside phosphorylase family. Homodimer.

The enzyme catalyses thymidine + phosphate = 2-deoxy-alpha-D-ribose 1-phosphate + thymine. The protein operates within pyrimidine metabolism; dTMP biosynthesis via salvage pathway; dTMP from thymine: step 1/2. In terms of biological role, the enzymes which catalyze the reversible phosphorolysis of pyrimidine nucleosides are involved in the degradation of these compounds and in their utilization as carbon and energy sources, or in the rescue of pyrimidine bases for nucleotide synthesis. This Sinorhizobium fredii (strain NBRC 101917 / NGR234) protein is Thymidine phosphorylase.